Reading from the N-terminus, the 299-residue chain is Tetrahydromethanopterin S-methyltransferase subunit E (299 aa).

6 helical membrane-spanning segments follow: residues 57 to 79, 89 to 111, 132 to 154, 164 to 183, 227 to 246, and 261 to 283; these read AISGEPVSYGLYVAVAGTIAWAL, AIIVGAGVAAIVHGAYSVSAFLG, HIGPIVGHGFIAVFTMTLAAYLA, LPLVSLIFGITVGAIGSSTG, FCSRFGGPLTGLCFGLIIFL, and LVTKTSIALLVGLLVVAVAAVIN.

It belongs to the MtrE family. As to quaternary structure, the complex is composed of 8 subunits; MtrA, MtrB, MtrC, MtrD, MtrE, MtrF, MtrG and MtrH.

The protein localises to the cell membrane. The catalysed reaction is 5-methyl-5,6,7,8-tetrahydromethanopterin + coenzyme M + 2 Na(+)(in) = 5,6,7,8-tetrahydromethanopterin + methyl-coenzyme M + 2 Na(+)(out). It functions in the pathway one-carbon metabolism; methanogenesis from CO(2); methyl-coenzyme M from 5,10-methylene-5,6,7,8-tetrahydromethanopterin: step 2/2. In terms of biological role, part of a complex that catalyzes the formation of methyl-coenzyme M and tetrahydromethanopterin from coenzyme M and methyl-tetrahydromethanopterin. This is an energy-conserving, sodium-ion translocating step. This is Tetrahydromethanopterin S-methyltransferase subunit E from Methanococcus maripaludis (strain DSM 14266 / JCM 13030 / NBRC 101832 / S2 / LL).